Reading from the N-terminus, the 378-residue chain is Alcohol dehydrogenase class-3 (378 aa).

Position 1 is an N-acetylalanine (alanine 1). Cysteine 46 serves as a coordination point for Zn(2+). Histidine 47 lines the NAD(+) pocket. The an alcohol site is built by threonine 48 and histidine 68. Residues histidine 68, glutamate 69, cysteine 98, cysteine 101, cysteine 104, cysteine 112, and cysteine 176 each coordinate Zn(2+). NAD(+)-binding positions include 201-206, aspartate 225, lysine 230, 294-296, 319-321, and arginine 371; these read GLGTVG, VGV, and TAF.

It belongs to the zinc-containing alcohol dehydrogenase family. Class-III subfamily. Homodimer. The cofactor is Zn(2+).

The protein localises to the cytoplasm. The catalysed reaction is a primary alcohol + NAD(+) = an aldehyde + NADH + H(+). The enzyme catalyses a secondary alcohol + NAD(+) = a ketone + NADH + H(+). It carries out the reaction S-(hydroxymethyl)glutathione + NADP(+) = S-formylglutathione + NADPH + H(+). It catalyses the reaction S-(hydroxymethyl)glutathione + NAD(+) = S-formylglutathione + NADH + H(+). Its function is as follows. Class-III ADH is remarkably ineffective in oxidizing ethanol, but it readily catalyzes the oxidation of long-chain primary alcohols and the oxidation of S-(hydroxymethyl) glutathione. This chain is Alcohol dehydrogenase class-3, found in Pisum sativum (Garden pea).